Reading from the N-terminus, the 470-residue chain is 5-hydroxytryptamine receptor 2A (470 aa).

Positions Met1 to Gly23 are disordered. At Met1–Leu80 the chain is on the extracellular side. The span at Pro10–Ser21 shows a compositional bias: low complexity. N-linked (GlcNAc...) asparagine glycosylation is found at Asn38, Asn44, Asn51, and Asn54. A helical transmembrane segment spans residues Thr81–Met97. Over Ala98–Tyr111 the chain is Cytoplasmic. The helical transmembrane segment at Phe112–Tyr137 threads the bilayer. Topologically, residues Gly138–Lys146 are extracellular. The chain crosses the membrane as a helical span at residues Leu147 to Leu171. Residues Cys148 and Cys227 are joined by a disulfide bond. Asp155 provides a ligand contact to serotonin. A DRY motif; important for ligand-induced conformation changes motif is present at residues Asp172–Tyr174. Residues Asp172–Lys191 are Cytoplasmic-facing. The chain crosses the membrane as a helical span at residues Ala192–Leu215. The Extracellular segment spans residues Gln216–Asp232. A helical membrane pass occupies residues Asn233–Ile258. The Cytoplasmic portion of the chain corresponds to Lys259–Cys321. Phosphoserine is present on Ser280. A helical transmembrane segment spans residues Lys322 to Ile347. Residue Asn342 coordinates serotonin. The cysteines at positions 348 and 352 are disulfide-linked. Topologically, residues Cys348–Asp355 are extracellular. Residues Ile356–Leu381 traverse the membrane as a helical segment. An NPxxY motif; important for ligand-induced conformation changes and signaling motif is present at residues Asn375 to Tyr379. The Cytoplasmic segment spans residues Phe382–Val470. The PDZ-binding signature appears at Ser468–Val470.

The protein belongs to the G-protein coupled receptor 1 family. Interacts (via C-terminus) with MPDZ and PATJ. May interact (via C-terminus) with MPP3, PRDX6, DLG4, DLG1, CASK, APBA1 and MAGI2. Interacts with GRM2 and DRD2; this may affect signaling. As to expression, ubiquitous.

The protein localises to the cell membrane. It is found in the cell projection. Its subcellular location is the dendrite. It localises to the axon. The protein resides in the cytoplasmic vesicle. The protein localises to the membrane. It is found in the caveola. Its subcellular location is the presynapse. Its activity is regulated as follows. G-protein coupled receptor activity is regulated by lipids: oleamide increases HTR2A-mediated activity. Functionally, G-protein coupled receptor for 5-hydroxytryptamine (serotonin). Also functions as a receptor for various drugs and psychoactive substances, including mescaline, psilocybin, 1-(2,5-dimethoxy-4-iodophenyl)-2-aminopropane (DOI) and lysergic acid diethylamide (LSD). Ligand binding causes a conformation change that triggers signaling via guanine nucleotide-binding proteins (G proteins) and modulates the activity of downstream effectors. HTR2A is coupled to G(q)/G(11) G alpha proteins and activates phospholipase C-beta, releasing diacylglycerol (DAG) and inositol 1,4,5-trisphosphate (IP3) second messengers that modulate the activity of phosphatidylinositol 3-kinase and promote the release of Ca(2+) ions from intracellular stores, respectively. Beta-arrestin family members inhibit signaling via G proteins and mediate activation of alternative signaling pathways. Affects neural activity, perception, cognition and mood. Plays a role in the regulation of behavior, including responses to anxiogenic situations and psychoactive substances. Plays a role in intestinal smooth muscle contraction, and may play a role in arterial vasoconstriction. This is 5-hydroxytryptamine receptor 2A (HTR2A) from Canis lupus familiaris (Dog).